The primary structure comprises 188 residues: Large ribosomal subunit protein eL18 (188 aa).

A disordered region spans residues 143-188; it reads RSAREAEKHFGPAPGVPHSHTKPHVRSKGRKFERARGRRASRAYKN. Basic residues-rich tracts occupy residues 161–171 and 178–188; these read SHTKPHVRSKG and RGRRASRAYKN.

Belongs to the eukaryotic ribosomal protein eL18 family.

The protein resides in the cytoplasm. This is Large ribosomal subunit protein eL18 (rpl-18) from Caenorhabditis briggsae.